We begin with the raw amino-acid sequence, 342 residues long: Heat-inducible transcription repressor HrcA (342 aa).

It belongs to the HrcA family.

In terms of biological role, negative regulator of class I heat shock genes (grpE-dnaK-dnaJ and groELS operons). Prevents heat-shock induction of these operons. In Shouchella clausii (strain KSM-K16) (Alkalihalobacillus clausii), this protein is Heat-inducible transcription repressor HrcA.